A 221-amino-acid chain; its full sequence is Stromal cell-derived factor 2-like protein 1 (221 aa).

An N-terminal signal peptide occupies residues 1 to 28 (MWSAGRGGAAWPVLLGLLLALLVPGGGA). MIR domains lie at 33 to 87 (AELV…IRGG), 95 to 150 (GSPV…VRCS), and 151 to 205 (GQHW…AMEG). S215 carries the post-translational modification Phosphoserine. The short motif at 218 to 221 (HDEL) is the Prevents secretion from ER element.

Part of a large chaperone multiprotein complex comprising CABP1, DNAJB11, HSP90B1, HSPA5, HYOU, PDIA2, PDIA4, PPIB, SDF2L1, UGGT1 and very small amounts of ERP29, but not, or at very low levels, CALR nor CANX. Ubiquitously expressed with high expression in testis, moderate expression in the pancreas, spleen, prostate, small intestine and colon. Very low expression is seen in brain and skeletal muscle.

The protein resides in the endoplasmic reticulum lumen. The chain is Stromal cell-derived factor 2-like protein 1 (SDF2L1) from Homo sapiens (Human).